A 254-amino-acid chain; its full sequence is Leucyl/phenylalanyl-tRNA--protein transferase (254 aa).

Belongs to the L/F-transferase family.

Its subcellular location is the cytoplasm. It catalyses the reaction N-terminal L-lysyl-[protein] + L-leucyl-tRNA(Leu) = N-terminal L-leucyl-L-lysyl-[protein] + tRNA(Leu) + H(+). The catalysed reaction is N-terminal L-arginyl-[protein] + L-leucyl-tRNA(Leu) = N-terminal L-leucyl-L-arginyl-[protein] + tRNA(Leu) + H(+). The enzyme catalyses L-phenylalanyl-tRNA(Phe) + an N-terminal L-alpha-aminoacyl-[protein] = an N-terminal L-phenylalanyl-L-alpha-aminoacyl-[protein] + tRNA(Phe). Functionally, functions in the N-end rule pathway of protein degradation where it conjugates Leu, Phe and, less efficiently, Met from aminoacyl-tRNAs to the N-termini of proteins containing an N-terminal arginine or lysine. This Burkholderia lata (strain ATCC 17760 / DSM 23089 / LMG 22485 / NCIMB 9086 / R18194 / 383) protein is Leucyl/phenylalanyl-tRNA--protein transferase.